A 399-amino-acid polypeptide reads, in one-letter code: Semaphorin-like protein 139 (399 aa).

Positions methionine 1–cysteine 14 are cleaved as a signal peptide. Residues isoleucine 15–methionine 399 form the Sema domain.

Belongs to the semaphorin family. In terms of assembly, interacts with host VESPR.

The protein resides in the secreted. In terms of biological role, acts as a semaphorin-like protein and binds to host plexin C1 receptor. May alter the movement of plexin C1-expressing cells including dendritic cells, monocytes, or granulocytes in the proximity of infected cells. May also regulate host cell cytoskeleton of neighboring cells to improve viral infection. This is Semaphorin-like protein 139 (EVM139) from Ectromelia virus (strain Moscow) (ECTV).